The following is a 186-amino-acid chain: Large ribosomal subunit protein uL22 (186 aa).

The tract at residues 159 to 186 is disordered; that stretch reads KAAENEPAKKKLSKKKLQRQKEKMMRNE. Basic and acidic residues predominate over residues 177–186; it reads RQKEKMMRNE.

This sequence belongs to the universal ribosomal protein uL22 family.

The sequence is that of Large ribosomal subunit protein uL22 (RpL17) from Aedes albopictus (Asian tiger mosquito).